The sequence spans 579 residues: Cytochrome P450 monooxygenase prx9 (579 aa).

Residues 6-25 (LPLGSFVGTTLLLFILYKLV) traverse the membrane as a helical segment. Residues Asn-194, Asn-292, and Asn-390 are each glycosylated (N-linked (GlcNAc...) asparagine). Position 512 (Cys-512) interacts with heme.

The protein belongs to the cytochrome P450 family. Requires heme as cofactor.

The protein localises to the membrane. Its pathway is sesquiterpene biosynthesis. In terms of biological role, cytochrome P450 monooxygenase; part of the gene cluster that mediates the biosynthesis of PR-toxin, a bicyclic sesquiterpene belonging to the eremophilane class and acting as a mycotoxin. The first step of the pathway is catalyzed by the aristolochene synthase which performs the cyclization of trans,trans-farnesyl diphosphate (FPP) to the bicyclic sesquiterpene aristolochene. Following the formation of aristolochene, the non-oxygenated aristolochene is converted to the trioxygenated intermediate eremofortin B, via 7-epi-neopetasone. This conversion appears to involve three enzymes, a hydroxysterol oxidase-like enzyme, the quinone-oxidase prx3 that forms the quinone-type-structure in the bicyclic nucleus of aristolochene with the C8-oxo group and the C-3 hydroxyl group, and the P450 monooxygenase prx9 that introduces the epoxide at the double bond between carbons 1 and 2. No monoxy or dioxy-intermediates have been reported to be released to the broth, so these three early oxidative reactions may be coupled together. Eremofortin B is further oxidized by another P450 monooxygenase, that introduces a second epoxide between carbons 7 and 11 prior to acetylation to eremofortin A by the acetyltransferase prx11. The second epoxidation may be performed by a second P450 monooxygenase. After the acetylation step, eremofortin A is converted to eremofortin C and then to PR-toxin. First the conversion of eremofortin A to eremofortin C proceeds by oxidation of the side chain of the molecule at C-12 and is catalyzed by the short-chain oxidoreductase prx1. The cytochrome P450 monooxygenase prx8 also plays a role in this step. The primary alcohol formed at C-12 is finally oxidized by the short-chain alcohol dehydrogenase prx4 that forms PR-toxin. This Penicillium rubens (strain ATCC 28089 / DSM 1075 / NRRL 1951 / Wisconsin 54-1255) (Penicillium chrysogenum) protein is Cytochrome P450 monooxygenase prx9.